Here is a 715-residue protein sequence, read N- to C-terminus: ATP-dependent zinc metalloprotease FtsH (715 aa).

Residues 1 to 10 (MKNKNRGFFR) are Cytoplasmic-facing. A helical transmembrane segment spans residues 11–31 (SSLSYAFVILAVIFLIYSFFG). Residues 32–137 (RSDGSVKHLS…KPAASNFWGS (106 aa)) are Extracellular-facing. Residues 138–158 (MLTLILPTLIMFALLYWMLIG) traverse the membrane as a helical segment. The Cytoplasmic portion of the chain corresponds to 159–715 (SQRGQGGSGG…LLDAVNNKFD (557 aa)). Positions 167–187 (GGPGGIMSFGRSKAKPADPKQ) are disordered. Residue 233–240 (GPPGTGKT) participates in ATP binding. A Zn(2+)-binding site is contributed by His-455. Residue Glu-456 is part of the active site. Residues His-459 and Asp-531 each coordinate Zn(2+).

The protein in the central section; belongs to the AAA ATPase family. It in the C-terminal section; belongs to the peptidase M41 family. Homohexamer. It depends on Zn(2+) as a cofactor.

Its subcellular location is the cell membrane. Its function is as follows. Acts as a processive, ATP-dependent zinc metallopeptidase for both cytoplasmic and membrane proteins. Plays a role in the quality control of integral membrane proteins. In terms of biological role, can complement an E.coli ftsH disruption mutant. This chain is ATP-dependent zinc metalloprotease FtsH, found in Oenococcus oeni (Leuconostoc oenos).